Reading from the N-terminus, the 556-residue chain is Cell wall integrity and stress response component 3 (556 aa).

The N-terminal stretch at 1–38 (MERVWFAKLTNKGTIKIGYISFILLSLLCQSLIGLVNA) is a signal peptide. The 94-residue stretch at 39-132 (DFNYEGCYSA…SSYMNVYVNA (94 aa)) folds into the WSC domain. At 39–384 (DFNYEGCYSA…QRLSGGAIAG (346 aa)) the chain is on the extracellular side. Asn84 carries N-linked (GlcNAc...) asparagine glycosylation. Composition is skewed to low complexity over residues 142-169 (SSSKEGSSTSYMPSTTSSLSSAQISSTT) and 184-257 (TTVS…STTS). 2 disordered regions span residues 142 to 257 (SSSK…STTS) and 269 to 312 (TLSS…PSTS). Residues Asn367 and Asn370 are each glycosylated (N-linked (GlcNAc...) asparagine). The chain crosses the membrane as a helical span at residues 385–405 (IVIGVVFGVIFIILILLFLIW). At 406–556 (RRRKSHDQLD…LSSTVSHNRA (151 aa)) the chain is on the cytoplasmic side. Disordered stretches follow at residues 425–444 (YSFGDEDANPIGPPPSSGTT) and 534–556 (LQVVNPDNPDNPELSSTVSHNRA). Residues 546-556 (ELSSTVSHNRA) show a composition bias toward polar residues.

It is found in the membrane. This Saccharomyces cerevisiae (strain ATCC 204508 / S288c) (Baker's yeast) protein is Cell wall integrity and stress response component 3 (WSC3).